We begin with the raw amino-acid sequence, 1758 residues long: uncharacterized protein (1758 aa).

Residues 1 to 12 (MCFFLGSRLAYA) form the signal peptide. Positions 1465–1758 (ENLYNNGMWI…SFILGGNYYF (294 aa)) constitute an Autotransporter domain.

Its subcellular location is the cell outer membrane. This is an uncharacterized protein from Escherichia coli (strain K12).